Reading from the N-terminus, the 90-residue chain is Probable Fe(2+)-trafficking protein (90 aa).

This sequence belongs to the Fe(2+)-trafficking protein family. In terms of assembly, monomer.

Could be a mediator in iron transactions between iron acquisition and iron-requiring processes, such as synthesis and/or repair of Fe-S clusters in biosynthetic enzymes. In Serratia proteamaculans (strain 568), this protein is Probable Fe(2+)-trafficking protein.